We begin with the raw amino-acid sequence, 393 residues long: MDPKRSQKESVLITGGSGYFGFRLGCALNQNGVHVILFDISSPAQTIPEGIKFIQGDIRHLSDVEKAFQDADVTCVFHIASYGMSGREQLNRNLIKEVNVRGTDNILQVCQRRRVPRLVYTSTFNVIFGGQVIRNGDESLPYLPLHLHPDHYSRTKSIAEQKVLEANATPLDRGDGVLRTCALRPAGIYGPGEQRHLPRIVSYIEKGLFKFVYGDPRSLVEFVHVDNLVQAHILASEALRADKGHIASGQPYFISDGRPVNNFEFFRPLVEGLGYTFPSTRLPLTLVYCFAFLTEMVHFILGRLYNFQPFLTRTEVYKTGVTHYFSLEKAKKELGYKAQPFDLQEAVEWFKAHGHGRSSGSRDSECFVWDGLLVFLLIIAVLMWLPSSVILSL.

Residue tyrosine 152 is the Proton acceptor of the active site. Lysine 156 is an NAD(+) binding site. A run of 2 helical transmembrane segments spans residues leucine 282–glycine 302 and glycine 371–leucine 391.

It belongs to the 3-beta-HSD family.

The protein localises to the membrane. The chain is Short-chain dehydrogenase/reductase family 42E member 1 (SDR42E1) from Homo sapiens (Human).